The primary structure comprises 640 residues: 1,4-alpha-glucan branching enzyme GlgB (640 aa).

The active-site Nucleophile is Asp-318. Glu-371 acts as the Proton donor in catalysis.

The protein belongs to the glycosyl hydrolase 13 family. GlgB subfamily. Monomer.

It catalyses the reaction Transfers a segment of a (1-&gt;4)-alpha-D-glucan chain to a primary hydroxy group in a similar glucan chain.. It participates in glycan biosynthesis; glycogen biosynthesis. Catalyzes the formation of the alpha-1,6-glucosidic linkages in glycogen by scission of a 1,4-alpha-linked oligosaccharide from growing alpha-1,4-glucan chains and the subsequent attachment of the oligosaccharide to the alpha-1,6 position. In Francisella tularensis subsp. tularensis (strain FSC 198), this protein is 1,4-alpha-glucan branching enzyme GlgB.